Reading from the N-terminus, the 317-residue chain is Serine/threonine-protein phosphatase PP1 isozyme 1 (317 aa).

D75, H77, D103, and N135 together coordinate Mn(2+). H136 serves as the catalytic Proton donor. The Mn(2+) site is built by H184 and H259.

Belongs to the PPP phosphatase family. PP-1 subfamily. Mn(2+) is required as a cofactor.

The enzyme catalyses O-phospho-L-seryl-[protein] + H2O = L-seryl-[protein] + phosphate. It carries out the reaction O-phospho-L-threonyl-[protein] + H2O = L-threonyl-[protein] + phosphate. The polypeptide is Serine/threonine-protein phosphatase PP1 isozyme 1 (NPP1) (Nicotiana tabacum (Common tobacco)).